We begin with the raw amino-acid sequence, 376 residues long: Succinyl-diaminopimelate desuccinylase (376 aa).

Residue His-68 coordinates Zn(2+). Asp-70 is an active-site residue. Asp-101 is a binding site for Zn(2+). Glu-135 serves as the catalytic Proton acceptor. 3 residues coordinate Zn(2+): Glu-136, Glu-164, and His-349.

It belongs to the peptidase M20A family. DapE subfamily. As to quaternary structure, homodimer. The cofactor is Zn(2+). Requires Co(2+) as cofactor.

The enzyme catalyses N-succinyl-(2S,6S)-2,6-diaminopimelate + H2O = (2S,6S)-2,6-diaminopimelate + succinate. The protein operates within amino-acid biosynthesis; L-lysine biosynthesis via DAP pathway; LL-2,6-diaminopimelate from (S)-tetrahydrodipicolinate (succinylase route): step 3/3. Catalyzes the hydrolysis of N-succinyl-L,L-diaminopimelic acid (SDAP), forming succinate and LL-2,6-diaminopimelate (DAP), an intermediate involved in the bacterial biosynthesis of lysine and meso-diaminopimelic acid, an essential component of bacterial cell walls. The protein is Succinyl-diaminopimelate desuccinylase of Marinobacter nauticus (strain ATCC 700491 / DSM 11845 / VT8) (Marinobacter aquaeolei).